Consider the following 375-residue polypeptide: Formate dehydrogenase (375 aa).

Ile-94 and Asn-120 together coordinate substrate. Residues 175–176, Asp-196, 231–235, Thr-257, Asp-283, 312–315, and Ser-358 contribute to the NAD(+) site; these read RI, PLHEK, and HMSG.

The protein belongs to the D-isomer specific 2-hydroxyacid dehydrogenase family. FDH subfamily. Homodimer.

It is found in the cytoplasm. It carries out the reaction formate + NAD(+) = CO2 + NADH. Its function is as follows. Catalyzes the NAD(+)-dependent oxidation of formate to carbon dioxide. Formate oxidation is the final step in the methanol oxidation pathway in methylotrophic microorganisms. Has a role in the detoxification of exogenous formate in non-methylotrophic organisms. The chain is Formate dehydrogenase from Neurospora crassa (strain ATCC 24698 / 74-OR23-1A / CBS 708.71 / DSM 1257 / FGSC 987).